A 210-amino-acid chain; its full sequence is HTH-type transcriptional repressor FabR (210 aa).

Residues 10–70 (KTRRSLVEAA…TMVDESGLML (61 aa)) enclose the HTH tetR-type domain. A DNA-binding region (H-T-H motif) is located at residues 33 to 52 (SLREVAREAGIAPTSFYRHF).

In terms of assembly, homodimer.

It is found in the cytoplasm. Functionally, represses the transcription of fabB, involved in unsaturated fatty acid (UFA) biosynthesis. By controlling UFA production, FabR directly influences the physical properties of the membrane bilayer. In Citrobacter koseri (strain ATCC BAA-895 / CDC 4225-83 / SGSC4696), this protein is HTH-type transcriptional repressor FabR.